Here is a 211-residue protein sequence, read N- to C-terminus: Uridine kinase (211 aa).

13-20 (GGTASGKT) lines the ATP pocket.

The protein belongs to the uridine kinase family.

Its subcellular location is the cytoplasm. The enzyme catalyses uridine + ATP = UMP + ADP + H(+). It carries out the reaction cytidine + ATP = CMP + ADP + H(+). It functions in the pathway pyrimidine metabolism; CTP biosynthesis via salvage pathway; CTP from cytidine: step 1/3. The protein operates within pyrimidine metabolism; UMP biosynthesis via salvage pathway; UMP from uridine: step 1/1. The sequence is that of Uridine kinase from Thermus thermophilus (strain ATCC BAA-163 / DSM 7039 / HB27).